The following is a 77-amino-acid chain: Sec-independent protein translocase protein TatA (77 aa).

The helical transmembrane segment at 1-21 threads the bilayer; it reads MGSFSIWHWLVVLAIVVLVFG. Residues 40 to 77 are disordered; sequence KEGMKGAEEENTQPPPSHQQVTGHSIKSEIEEKDQTKV. Over residues 65-77 the composition is skewed to basic and acidic residues; it reads IKSEIEEKDQTKV.

Belongs to the TatA/E family. As to quaternary structure, the Tat system comprises two distinct complexes: a TatABC complex, containing multiple copies of TatA, TatB and TatC subunits, and a separate TatA complex, containing only TatA subunits. Substrates initially bind to the TatABC complex, which probably triggers association of the separate TatA complex to form the active translocon.

It localises to the cell inner membrane. Its function is as follows. Part of the twin-arginine translocation (Tat) system that transports large folded proteins containing a characteristic twin-arginine motif in their signal peptide across membranes. TatA could form the protein-conducting channel of the Tat system. The protein is Sec-independent protein translocase protein TatA of Nitrosomonas eutropha (strain DSM 101675 / C91 / Nm57).